A 418-amino-acid polypeptide reads, in one-letter code: Histidinol dehydrogenase (418 aa).

Residues Tyr-119, Gln-180, and Asn-203 each coordinate NAD(+). Substrate is bound by residues Thr-226, Gln-248, and His-251. Residues Gln-248 and His-251 each coordinate Zn(2+). Residues Glu-316 and His-317 each act as proton acceptor in the active site. Residues His-317, Asp-350, Glu-404, and His-409 each contribute to the substrate site. Position 350 (Asp-350) interacts with Zn(2+). His-409 is a binding site for Zn(2+).

Belongs to the histidinol dehydrogenase family. Requires Zn(2+) as cofactor.

It catalyses the reaction L-histidinol + 2 NAD(+) + H2O = L-histidine + 2 NADH + 3 H(+). Its pathway is amino-acid biosynthesis; L-histidine biosynthesis; L-histidine from 5-phospho-alpha-D-ribose 1-diphosphate: step 9/9. Its function is as follows. Catalyzes the sequential NAD-dependent oxidations of L-histidinol to L-histidinaldehyde and then to L-histidine. This Staphylococcus aureus (strain COL) protein is Histidinol dehydrogenase.